Here is a 144-residue protein sequence, read N- to C-terminus: Large ribosomal subunit protein uL11 (144 aa).

This sequence belongs to the universal ribosomal protein uL11 family. As to quaternary structure, part of the ribosomal stalk of the 50S ribosomal subunit. Interacts with L10 and the large rRNA to form the base of the stalk. L10 forms an elongated spine to which L12 dimers bind in a sequential fashion forming a multimeric L10(L12)X complex. Post-translationally, one or more lysine residues are methylated.

Functionally, forms part of the ribosomal stalk which helps the ribosome interact with GTP-bound translation factors. The protein is Large ribosomal subunit protein uL11 of Rhodococcus erythropolis (strain PR4 / NBRC 100887).